Reading from the N-terminus, the 353-residue chain is UDP-N-acetylglucosamine--N-acetylmuramyl-(pentapeptide) pyrophosphoryl-undecaprenol N-acetylglucosamine transferase (353 aa).

Residues 10–12 (TGG), Asn-124, Ser-183, and Gln-283 each bind UDP-N-acetyl-alpha-D-glucosamine.

The protein belongs to the glycosyltransferase 28 family. MurG subfamily.

Its subcellular location is the cell inner membrane. It carries out the reaction di-trans,octa-cis-undecaprenyl diphospho-N-acetyl-alpha-D-muramoyl-L-alanyl-D-glutamyl-meso-2,6-diaminopimeloyl-D-alanyl-D-alanine + UDP-N-acetyl-alpha-D-glucosamine = di-trans,octa-cis-undecaprenyl diphospho-[N-acetyl-alpha-D-glucosaminyl-(1-&gt;4)]-N-acetyl-alpha-D-muramoyl-L-alanyl-D-glutamyl-meso-2,6-diaminopimeloyl-D-alanyl-D-alanine + UDP + H(+). It participates in cell wall biogenesis; peptidoglycan biosynthesis. Cell wall formation. Catalyzes the transfer of a GlcNAc subunit on undecaprenyl-pyrophosphoryl-MurNAc-pentapeptide (lipid intermediate I) to form undecaprenyl-pyrophosphoryl-MurNAc-(pentapeptide)GlcNAc (lipid intermediate II). This is UDP-N-acetylglucosamine--N-acetylmuramyl-(pentapeptide) pyrophosphoryl-undecaprenol N-acetylglucosamine transferase from Helicobacter pylori (strain ATCC 700392 / 26695) (Campylobacter pylori).